A 368-amino-acid polypeptide reads, in one-letter code: Glutamyl-tRNA reductase (368 aa).

Residues 43 to 46 (TCHR), Ser-89, 94 to 96 (EHQ), and Gln-100 contribute to the substrate site. Residue Cys-44 is the Nucleophile of the active site. 164 to 169 (GTGMMG) is an NADP(+) binding site.

Belongs to the glutamyl-tRNA reductase family. Homodimer.

The catalysed reaction is (S)-4-amino-5-oxopentanoate + tRNA(Glu) + NADP(+) = L-glutamyl-tRNA(Glu) + NADPH + H(+). The protein operates within porphyrin-containing compound metabolism; protoporphyrin-IX biosynthesis; 5-aminolevulinate from L-glutamyl-tRNA(Glu): step 1/2. Its function is as follows. Catalyzes the NADPH-dependent reduction of glutamyl-tRNA(Glu) to glutamate 1-semialdehyde (GSA). In Thermosipho melanesiensis (strain DSM 12029 / CIP 104789 / BI429), this protein is Glutamyl-tRNA reductase.